The primary structure comprises 506 residues: ATP synthase subunit alpha (506 aa).

171–178 (GDRQTGKT) lines the ATP pocket.

The protein belongs to the ATPase alpha/beta chains family. F-type ATPases have 2 components, CF(1) - the catalytic core - and CF(0) - the membrane proton channel. CF(1) has five subunits: alpha(3), beta(3), gamma(1), delta(1), epsilon(1). CF(0) has four main subunits: a(1), b(1), b'(1) and c(9-12).

Its subcellular location is the cellular thylakoid membrane. It carries out the reaction ATP + H2O + 4 H(+)(in) = ADP + phosphate + 5 H(+)(out). Functionally, produces ATP from ADP in the presence of a proton gradient across the membrane. The alpha chain is a regulatory subunit. The protein is ATP synthase subunit alpha of Trichormus variabilis (strain ATCC 29413 / PCC 7937) (Anabaena variabilis).